A 210-amino-acid chain; its full sequence is dTTP/UTP pyrophosphatase (210 aa).

Asp89 functions as the Proton acceptor in the catalytic mechanism.

Belongs to the Maf family. YhdE subfamily. A divalent metal cation is required as a cofactor.

The protein localises to the cytoplasm. It carries out the reaction dTTP + H2O = dTMP + diphosphate + H(+). It catalyses the reaction UTP + H2O = UMP + diphosphate + H(+). Functionally, nucleoside triphosphate pyrophosphatase that hydrolyzes dTTP and UTP. May have a dual role in cell division arrest and in preventing the incorporation of modified nucleotides into cellular nucleic acids. In Burkholderia lata (strain ATCC 17760 / DSM 23089 / LMG 22485 / NCIMB 9086 / R18194 / 383), this protein is dTTP/UTP pyrophosphatase.